The sequence spans 379 residues: Cytochrome b (379 aa).

The next 4 membrane-spanning stretches (helical) occupy residues Phe33–Met53, Trp77–Val98, Trp113–Leu133, and Phe178–Leu198. Residues His83 and His97 each coordinate heme b. Residues His182 and His196 each contribute to the heme b site. His201 is an a ubiquinone binding site. The next 4 membrane-spanning stretches (helical) occupy residues Thr226–Phe246, Leu288–Asn308, Ile320–Gly340, and Phe347–Pro367.

Belongs to the cytochrome b family. In terms of assembly, the cytochrome bc1 complex contains 11 subunits: 3 respiratory subunits (MT-CYB, CYC1 and UQCRFS1), 2 core proteins (UQCRC1 and UQCRC2) and 6 low-molecular weight proteins (UQCRH/QCR6, UQCRB/QCR7, UQCRQ/QCR8, UQCR10/QCR9, UQCR11/QCR10 and a cleavage product of UQCRFS1). This cytochrome bc1 complex then forms a dimer. The cofactor is heme b.

It is found in the mitochondrion inner membrane. Its function is as follows. Component of the ubiquinol-cytochrome c reductase complex (complex III or cytochrome b-c1 complex) that is part of the mitochondrial respiratory chain. The b-c1 complex mediates electron transfer from ubiquinol to cytochrome c. Contributes to the generation of a proton gradient across the mitochondrial membrane that is then used for ATP synthesis. The protein is Cytochrome b (MT-CYB) of Akodon spegazzinii (Spegazzini's grass mouse).